The sequence spans 410 residues: Mating-type locus allele B4 protein (410 aa).

The interval 1–110 (MSSDPKISIT…ANASSPVVGC (110 aa)) is variable domain between B alleles. The homeobox; TALE-type DNA-binding region spans 107-184 (VVGCRELSED…NARRRSGWSH (78 aa)). The segment at 111–410 (RELSEDLPAY…PFLCLSVAFV (300 aa)) is highly conserved between B alleles. Disordered regions lie at residues 202-241 (RAKL…TPAD), 278-335 (TPKP…TPEL), and 375-394 (RGNR…QPDE). The segment covering 206 to 222 (SSSNQSTPPSPTSEYPS) has biased composition (low complexity). The Nuclear localization signal motif lies at 276–308 (KKTPKPGMPRPVTTVAKRQPARKTKPAAKPKSR). Over residues 294–307 (QPARKTKPAAKPKS) the composition is skewed to basic residues. Polar residues predominate over residues 312–335 (PRASTTPSIDSTLDSSKLESTPEL). Residues 333–410 (PELSMCSTAD…PFLCLSVAFV (78 aa)) are not essential for B4 function. Residues 375–388 (RGNRKVKALPKRAG) show a composition bias toward basic residues.

This sequence belongs to the TALE/M-ATYP homeobox family.

It localises to the nucleus. The B locus has at least 25 alleles, and any combination of two different B alleles yields a multimeric regulatory protein, that activates genes responsible for the pathogenicity and for the sexual development of the fungus within the corn plant. This Mycosarcoma maydis (Corn smut fungus) protein is Mating-type locus allele B4 protein.